The following is a 348-amino-acid chain: Zinc finger and SCAN domain-containing protein 16 (348 aa).

The SCAN box domain maps to 41 to 123 (RQHFRKLCYQ…TVLEDLEREL (83 aa)). Disordered regions lie at residues 160-184 (PKKT…TKNE) and 205-226 (RLNK…EGRS). Residues 163-184 (TQLEQEAGKPQRNGDKTRTKNE) show a composition bias toward basic and acidic residues. C2H2-type zinc fingers lie at residues 236-258 (YKCD…RRTH), 264-286 (YKCD…HRVH), 292-314 (YKCK…QRIH), and 320-342 (YECD…QRIH).

Belongs to the krueppel C2H2-type zinc-finger protein family.

The protein resides in the nucleus. Its function is as follows. May be involved in transcriptional regulation. The sequence is that of Zinc finger and SCAN domain-containing protein 16 (ZSCAN16) from Homo sapiens (Human).